Consider the following 268-residue polypeptide: Small ribosomal subunit protein eS1 (268 aa).

Residues 1–21 form a disordered region; the sequence is MAVGKNKGLSKGGKKGGKKKV.

This sequence belongs to the eukaryotic ribosomal protein eS1 family. In terms of assembly, component of the small ribosomal subunit. Mature ribosomes consist of a small (40S) and a large (60S) subunit. The 40S subunit contains about 33 different proteins and 1 molecule of RNA (18S). The 60S subunit contains about 49 different proteins and 3 molecules of RNA (28S, 5.8S and 5S).

It is found in the cytoplasm. In terms of biological role, essential for oogenesis; required for late follicle cell development. In Drosophila persimilis (Fruit fly), this protein is Small ribosomal subunit protein eS1.